A 190-amino-acid chain; its full sequence is GMP synthase [glutamine-hydrolyzing] subunit A (190 aa).

The Glutamine amidotransferase type-1 domain maps to 2 to 189 (TILVINNKGQ…YEICKKRCNN (188 aa)). Cys76 functions as the Nucleophile in the catalytic mechanism. Residues His163 and Glu165 contribute to the active site.

In terms of assembly, heterodimer composed of a glutamine amidotransferase subunit (A) and a GMP-binding subunit (B).

It catalyses the reaction XMP + L-glutamine + ATP + H2O = GMP + L-glutamate + AMP + diphosphate + 2 H(+). It functions in the pathway purine metabolism; GMP biosynthesis; GMP from XMP (L-Gln route): step 1/1. Catalyzes the synthesis of GMP from XMP. The sequence is that of GMP synthase [glutamine-hydrolyzing] subunit A from Methanobrevibacter smithii (strain ATCC 35061 / DSM 861 / OCM 144 / PS).